Reading from the N-terminus, the 790-residue chain is Sorting nexin mvp1 (790 aa).

Composition is skewed to polar residues over residues 1 to 10 (MSLFGSSPPN) and 20 to 40 (KTANSSRSTLFDNEAPTTRSG). Disordered stretches follow at residues 1–62 (MSLF…RKQR), 215–342 (PNLS…SIHN), and 373–406 (AITGPFGDSGGPGQSVSGSVGGSNPNRSIGHVRS). A compositionally biased stretch (pro residues) spans 225–240 (PQRPVTPPKAPTPSPP). Over residues 241-252 (KQQQQQQHQPPT) the composition is skewed to low complexity. Basic and acidic residues predominate over residues 269-283 (DLHKGHNHGPLEHST). Over residues 297–319 (NDLNGNDAVSYSTSPEVTTTSSA) the composition is skewed to polar residues. Low complexity-rich tracts occupy residues 324-339 (TTSTFTTSQPPSGPSS) and 386-400 (QSVSGSVGGSNPNRS). The 115-residue stretch at 411 to 525 (EENILVTLMP…IMFLTVPTEL (115 aa)) folds into the PX domain. Arginine 447, serine 449, lysine 473, and arginine 492 together coordinate a 1,2-diacyl-sn-glycero-3-phospho-(1D-myo-inositol-3-phosphate).

This sequence belongs to the sorting nexin family.

It is found in the cytoplasm. Its subcellular location is the membrane. Its function is as follows. Required for vacuolar protein sorting. The sequence is that of Sorting nexin mvp1 (vsp-1) from Neurospora crassa (strain ATCC 24698 / 74-OR23-1A / CBS 708.71 / DSM 1257 / FGSC 987).